The sequence spans 283 residues: Accumulation of dyads protein 2 (283 aa).

The tract at residues Met1 to Ser41 is disordered. Topologically, residues Met1–Asn89 are cytoplasmic. The chain crosses the membrane as a helical span at residues Pro90–Ala110. At Arg111–Val120 the chain is on the extracellular side. The chain crosses the membrane as a helical span at residues Val121–Ile141. Residues Ala142–Ala151 lie on the Cytoplasmic side of the membrane. A helical membrane pass occupies residues Leu152 to Ile172. At Leu173–Asn185 the chain is on the extracellular side. A helical membrane pass occupies residues Ala186–Met206. Over Lys207 to Ser208 the chain is Cytoplasmic. The chain crosses the membrane as a helical span at residues Thr209–Gly229. Residues His230–Ala240 lie on the Extracellular side of the membrane. The helical transmembrane segment at Gly241–Ala261 threads the bilayer. The Cytoplasmic segment spans residues Thr262–Phe283.

It belongs to the acetate uptake transporter (AceTr) (TC 2.A.96) family.

The protein resides in the cell membrane. The protein localises to the vacuole membrane. Functionally, transporter protein required for ammonia export and acetate uptake and resistance. Necessary for up-regulation and down-regulation of meiotic plaque (MP) component levels in a dependency on external acetate. Has a role in ascus formation. The protein is Accumulation of dyads protein 2 (ADY2) of Saccharomyces cerevisiae (strain ATCC 204508 / S288c) (Baker's yeast).